A 619-amino-acid polypeptide reads, in one-letter code: DNA polymerase II small subunit (619 aa).

The disordered stretch occupies residues 78–122 (EEAEKTVESQETRASELEEGGVSQVSSGELQELKEESPEISTTEE). Residues 79 to 93 (EAEKTVESQETRASE) are compositionally biased toward basic and acidic residues.

This sequence belongs to the DNA polymerase delta/II small subunit family. As to quaternary structure, heterodimer of a large subunit and a small subunit.

It catalyses the reaction DNA(n) + a 2'-deoxyribonucleoside 5'-triphosphate = DNA(n+1) + diphosphate. The enzyme catalyses Exonucleolytic cleavage in the 3'- to 5'-direction to yield nucleoside 5'-phosphates.. Possesses two activities: a DNA synthesis (polymerase) and an exonucleolytic activity that degrades single-stranded DNA in the 3' to 5' direction. Has a template-primer preference which is characteristic of a replicative DNA polymerase. This Pyrococcus abyssi (strain GE5 / Orsay) protein is DNA polymerase II small subunit (polB).